We begin with the raw amino-acid sequence, 258 residues long: NAD kinase (258 aa).

The active-site Proton acceptor is the D51. Residues 51–52 (DG), K56, 119–120 (ND), K130, D149, 160–165 (TAYSLS), and A184 contribute to the NAD(+) site.

This sequence belongs to the NAD kinase family. A divalent metal cation serves as cofactor.

The protein localises to the cytoplasm. It catalyses the reaction NAD(+) + ATP = ADP + NADP(+) + H(+). Functionally, involved in the regulation of the intracellular balance of NAD and NADP, and is a key enzyme in the biosynthesis of NADP. Catalyzes specifically the phosphorylation on 2'-hydroxyl of the adenosine moiety of NAD to yield NADP. The chain is NAD kinase from Thermotoga petrophila (strain ATCC BAA-488 / DSM 13995 / JCM 10881 / RKU-1).